The primary structure comprises 315 residues: Calumenin (315 aa).

Residues 1–19 (MDLRQFLLCLSLCTAFALS) form the signal peptide. Phosphotyrosine is present on tyrosine 47. At threonine 65 the chain carries Phosphothreonine. 6 consecutive EF-hand domains span residues 68–103 (ESKE…AQKR), 104–139 (WIHE…YVLD), 151–186 (QMMV…DEYD), 188–223 (MKDI…HDGN), 229–264 (WVKT…SDYD), and 265–300 (HAEA…FVGS). Phosphoserine is present on serine 69. Ca(2+) is bound by residues aspartate 81, aspartate 83, aspartate 85, glutamate 92, aspartate 117, asparagine 119, aspartate 121, and glutamate 128. Residue asparagine 131 is glycosylated (N-linked (GlcNAc...) asparagine). Residue aspartate 164 participates in Ca(2+) binding. Lysine 165 is subject to N6-acetyllysine. Residues aspartate 166, aspartate 168, glutamate 175, aspartate 201, asparagine 203, aspartate 205, glutamate 212, aspartate 242, asparagine 244, aspartate 246, arginine 248, and glutamate 253 each contribute to the Ca(2+) site. The residue at position 254 (threonine 254) is a Phosphothreonine. Residues serine 261 and serine 277 each carry the phosphoserine modification. Aspartate 278, asparagine 280, aspartate 282, lysine 284, and glutamate 289 together coordinate Ca(2+). The Prevents secretion from ER motif lies at 312–315 (HDEF).

It belongs to the CREC family. Interacts with GGCX.

Its subcellular location is the endoplasmic reticulum membrane. The protein resides in the golgi apparatus. The protein localises to the secreted. It is found in the melanosome. It localises to the sarcoplasmic reticulum lumen. Functionally, involved in regulation of vitamin K-dependent carboxylation of multiple N-terminal glutamate residues. Seems to inhibit gamma-carboxylase GGCX. Binds 7 calcium ions with a low affinity. The chain is Calumenin (CALU) from Mesocricetus auratus (Golden hamster).